The primary structure comprises 505 residues: tRNA-2-methylthio-N(6)-dimethylallyladenosine synthase (505 aa).

Residues 1-39 are disordered; sequence MGQKAKAQAPTTHPRPHTLSSQVAPALPRRPRHAAPESL. Residues 47-162 enclose the MTTase N-terminal domain; sequence MKAHLITYGC…IGAALESNER (116 aa). Positions 56, 92, 125, 194, 198, and 201 each coordinate [4Fe-4S] cluster. One can recognise a Radical SAM core domain in the interval 180–413; it reads PSGKLQAHLT…IARQKDWSAR (234 aa). Residues 416–479 enclose the TRAM domain; that stretch reads AQKVGTVQQV…PHMMYGHILG (64 aa).

The protein belongs to the methylthiotransferase family. MiaB subfamily. In terms of assembly, monomer. Requires [4Fe-4S] cluster as cofactor.

Its subcellular location is the cytoplasm. The catalysed reaction is N(6)-dimethylallyladenosine(37) in tRNA + (sulfur carrier)-SH + AH2 + 2 S-adenosyl-L-methionine = 2-methylsulfanyl-N(6)-dimethylallyladenosine(37) in tRNA + (sulfur carrier)-H + 5'-deoxyadenosine + L-methionine + A + S-adenosyl-L-homocysteine + 2 H(+). Its function is as follows. Catalyzes the methylthiolation of N6-(dimethylallyl)adenosine (i(6)A), leading to the formation of 2-methylthio-N6-(dimethylallyl)adenosine (ms(2)i(6)A) at position 37 in tRNAs that read codons beginning with uridine. The chain is tRNA-2-methylthio-N(6)-dimethylallyladenosine synthase from Deinococcus radiodurans (strain ATCC 13939 / DSM 20539 / JCM 16871 / CCUG 27074 / LMG 4051 / NBRC 15346 / NCIMB 9279 / VKM B-1422 / R1).